A 97-amino-acid chain; its full sequence is Co-chaperonin GroES (97 aa).

The protein belongs to the GroES chaperonin family. As to quaternary structure, heptamer of 7 subunits arranged in a ring. Interacts with the chaperonin GroEL.

The protein localises to the cytoplasm. Its function is as follows. Together with the chaperonin GroEL, plays an essential role in assisting protein folding. The GroEL-GroES system forms a nano-cage that allows encapsulation of the non-native substrate proteins and provides a physical environment optimized to promote and accelerate protein folding. GroES binds to the apical surface of the GroEL ring, thereby capping the opening of the GroEL channel. The sequence is that of Co-chaperonin GroES from Stutzerimonas stutzeri (Pseudomonas stutzeri).